The chain runs to 229 residues: MAVSFTNVSSEAGLKKLDEYLLTRSYISGYQASNDDLAVYSAFSTAPSSSYTNVARWFTHIDALLRLSGVTADGQGVKVESTAVPSASTPDVADAKAPAADDDDDDDVDLFGEETEEEKKAAEERAAAVKASGKKKESGKSSVLLDVKPWDDETDMTKLEEAVRNVKMEGLLWGASKLVPVGYGIKKLQIMMTIVDDLVSVDSLIEDYFYTEPANEYIQSCDIVAFNKI.

The disordered stretch occupies residues 80 to 109 (ESTAVPSASTPDVADAKAPAADDDDDDDVD). Over residues 100–109 (ADDDDDDDVD) the composition is skewed to acidic residues.

Belongs to the EF-1-beta/EF-1-delta family. As to quaternary structure, EF-1 is composed of 4 subunits: alpha, beta (1B-alpha=beta'), delta (1B-beta), and gamma (1B-gamma).

Its function is as follows. EF-1-beta and EF-1-beta' stimulate the exchange of GDP bound to EF-1-alpha to GTP. The sequence is that of Elongation factor 1-delta 1 from Oryza sativa subsp. japonica (Rice).